An 879-amino-acid polypeptide reads, in one-letter code: MKQLSSAEVRQLFLDFFKEKGHTIEPSAPLVPNNDPTILWINSGVATMKKYFDGSVIPDNPRMANAQKSIRTNDIENVGKTARHHTFFEMLGNFSIGDYFKEGAIVFAWEFLTSPKWIGFDPDKLYVTVYPEDEEAKTLWREKIGLSDDHIVEIEDNFWDIGIGPSGPDSEIFYDRGPAFGDDASDPELYPGGENERYLEIWNLVFSQFNHNPDGTYTPLPKQNIDTGMGLERMVSIIQDAPTNFETDLFMPIIREVEQIAGVKYGHSQENDVAFKVIADHIRTVAFAIGDGALPSNEGRGYILRRLLRRAVRYAKVLTINEPFMYKLVPVVGKIMNSFYPEVENQTDFIQKVIRTEEERFHETLNEGLAILETILKTAKETNEQIIKGADIFKLYDTFGFPVELTEEYAEDHGLKVDHAGFEAEMKEQRDRARSARADVKSMQVQGELLANLTEKSAFVGYNSTEHVSEILYLIQDDTLVEEVAAGSEAQVIFKETPFYAESGGQVADKGTIESETGLAYVEDVQKAPNKQNLHRISVKEGVLKTGDTVKLAVDKVKRRETIKNHTATHLLHRALKDTLGEHVNQAGSLVSPDRLRFDFSHFGQITEEELTKLEEIVNEKIWEQINVVIEEMPIAEAKELGAMALFGEKYGDIVRVVQVGKYSIELCGGVHVRNTADIGLFKIVSETGIGAGTRRIEAVTGKEAYRFVTEQENTLKQAASLLKTTTKETPQKVEQLQADLREVKRENESLLSKLASAASADIFESPEEIGGVKVIAKQVNAKDMNQLRQFVDNWKDKKIGGILVLGAVQGDKVNLISAVSEEAIKAGYHAGKLLKEVATRCGGNGGGRPDMAQAGGKNPAELGTALDYVSTWVKEQQA.

Positions 566, 570, 668, and 672 each coordinate Zn(2+).

This sequence belongs to the class-II aminoacyl-tRNA synthetase family. Zn(2+) serves as cofactor.

Its subcellular location is the cytoplasm. It catalyses the reaction tRNA(Ala) + L-alanine + ATP = L-alanyl-tRNA(Ala) + AMP + diphosphate. Its function is as follows. Catalyzes the attachment of alanine to tRNA(Ala) in a two-step reaction: alanine is first activated by ATP to form Ala-AMP and then transferred to the acceptor end of tRNA(Ala). Also edits incorrectly charged Ser-tRNA(Ala) and Gly-tRNA(Ala) via its editing domain. This chain is Alanine--tRNA ligase, found in Listeria monocytogenes serotype 4b (strain F2365).